Here is a 607-residue protein sequence, read N- to C-terminus: Pescadillo homolog (607 aa).

The disordered stretch occupies residues 301 to 341 (ANVVEQSEKTTEDADEEPETEENLDEFKPADGADNEDSKSL). Positions 313–324 (DADEEPETEENL) are enriched in acidic residues. Over residues 325 to 339 (DEFKPADGADNEDSK) the composition is skewed to basic and acidic residues. The BRCT domain occupies 348–441 (SNTSLFSNFT…ILERTDLYAC (94 aa)). Residues 497 to 604 (ENVEQIDDAE…RDIEKRKKLK (108 aa)) adopt a coiled-coil conformation. The segment at 531–607 (QNSKSAKKTK…EKRKKLKVEN (77 aa)) is disordered. Basic and acidic residues-rich tracts occupy residues 544-561 (RDTL…KELS) and 595-607 (RDIE…KVEN).

The protein belongs to the pescadillo family. As to quaternary structure, component of the NOP7 complex, composed of erb1/SPBC4F6.13c, ppp1/SPBC19F5.05c and ytm1/SPAC890.04c. Within the NOP7 complex erb1/SPBC4F6.13c appears to interact directly with ppp1/SPBC19F5.05c and ytm1/SPAC890.04c. The NOP7 complex also associates with the 66S pre-ribosome.

The protein localises to the nucleus. It is found in the nucleoplasm. It localises to the nucleolus. Its function is as follows. Component of the NOP7 complex, which is required for maturation of the 25S and 5.8S ribosomal RNAs and formation of the 60S ribosome. In Schizosaccharomyces pombe (strain 972 / ATCC 24843) (Fission yeast), this protein is Pescadillo homolog (ppp1).